The sequence spans 509 residues: MVFADFLEKIKSLFAKTKDPITSMSPPQENRSPKAEYLNNFFNTNPTNGKSRGSQEAPRKPLGQTNLNVQGSMPAKKEGFNRVLDGLKKRQLQHDFKLERAAETYEPTQNIGSGAFGIVCEAVETSSNQKVAIKKVAHASATPTLARRTLREIRVLRYINHPNIVPLRDIFRTKGPLGIDVFLVMDLMQNNLHHIIYGNEDPLEEHYINAFLGQLLRGLEYLHAACIAHRDLKPSNLLVNQDGTLRIADFGMAKCADNSSKKHDDEEHCYYMTQHVATLPYRAPELLFVLPEHSTAVDMWAVGCIFGEMVIRNEILPGRSVQGQIKMLLTMLGQPPQEVINEVRCDRTRKLIQDFGRKADAEWDDIMFCKARGDDQIVRGNCDTIDFVKQLFQYDAQKRINIQDALLHPYIQRVIPAEAPQKKCPFRVKKDMMQVEDLNHQELISMMKQDVRSAENPITYSELHSGDSTGSTSDMSTNTSGEYSPIAQHEQLLEDVATQISICEPTCDL.

Residues 19-72 (DPITSMSPPQENRSPKAEYLNNFFNTNPTNGKSRGSQEAPRKPLGQTNLNVQGS) form a disordered region. Polar residues-rich tracts occupy residues 20 to 30 (PITSMSPPQEN) and 40 to 54 (NFFNTNPTNGKSRGS). The Protein kinase domain occupies 105–411 (YEPTQNIGSG…IQDALLHPYI (307 aa)). ATP contacts are provided by residues 111 to 119 (IGSGAFGIV) and Lys-134. Catalysis depends on Asp-231, which acts as the Proton acceptor. Residues 460 to 482 (YSELHSGDSTGSTSDMSTNTSGE) form a disordered region. The span at 466-481 (GDSTGSTSDMSTNTSG) shows a compositional bias: low complexity.

The protein belongs to the protein kinase superfamily. CMGC Ser/Thr protein kinase family. MAP kinase subfamily. It depends on Mg(2+) as a cofactor. In terms of tissue distribution, expressed in intestine with a stronger expression in the four most anterior cells, muscles, excretory cell, pharynx and, to a lesser extent, in hypodermis.

The enzyme catalyses L-seryl-[protein] + ATP = O-phospho-L-seryl-[protein] + ADP + H(+). It carries out the reaction L-threonyl-[protein] + ATP = O-phospho-L-threonyl-[protein] + ADP + H(+). Functionally, serine/threonine-protein kinase involved in the postembryonic regulation of body size, mainly through control of cell growth. In particular, controls the volume of intestine, muscles and hypodermis. In addition, regulates growth, intestinal granule distribution, lifespan and number of offspring. The sequence is that of Mitogen-activated protein kinase sma-5 from Caenorhabditis elegans.